The primary structure comprises 533 residues: Trigger factor (533 aa).

In terms of domain architecture, PPIase FKBP-type spans 164 to 249 (GDQLIIDFTG…VKQVKVETDT (86 aa)). Positions 436–533 (EAAIEAEAEE…APAKKPAAKK (98 aa)) are disordered. The segment covering 465-477 (AAAKKAPAKKAPA) has biased composition (basic residues). The span at 481–490 (AAKDGDEKPA) shows a compositional bias: basic and acidic residues. Composition is skewed to basic residues over residues 494–506 (APAK…KAST) and 515–533 (PAKK…AAKK).

This sequence belongs to the FKBP-type PPIase family. Tig subfamily.

The protein localises to the cytoplasm. It catalyses the reaction [protein]-peptidylproline (omega=180) = [protein]-peptidylproline (omega=0). Its function is as follows. Involved in protein export. Acts as a chaperone by maintaining the newly synthesized protein in an open conformation. Functions as a peptidyl-prolyl cis-trans isomerase. This Erythrobacter litoralis (strain HTCC2594) protein is Trigger factor.